Here is a 366-residue protein sequence, read N- to C-terminus: Holliday junction branch migration complex subunit RuvB (366 aa).

The segment at 3–183 (ADGLVSAAAS…FGFTAHLDFY (181 aa)) is large ATPase domain (RuvB-L). Residues L22, R23, G64, K67, T68, S69, 130–132 (EDF), R173, Y183, and R220 each bind ATP. T68 is a Mg(2+) binding site. The segment at 184 to 254 (APDELARVLT…VARAALRIYD (71 aa)) is small ATPAse domain (RuvB-S). Residues 257 to 366 (GLGLDRLDRA…PEDGLHPGGG (110 aa)) form a head domain (RuvB-H) region. DNA-binding residues include R312 and R317.

The protein belongs to the RuvB family. In terms of assembly, homohexamer. Forms an RuvA(8)-RuvB(12)-Holliday junction (HJ) complex. HJ DNA is sandwiched between 2 RuvA tetramers; dsDNA enters through RuvA and exits via RuvB. An RuvB hexamer assembles on each DNA strand where it exits the tetramer. Each RuvB hexamer is contacted by two RuvA subunits (via domain III) on 2 adjacent RuvB subunits; this complex drives branch migration. In the full resolvosome a probable DNA-RuvA(4)-RuvB(12)-RuvC(2) complex forms which resolves the HJ.

The protein resides in the cytoplasm. The catalysed reaction is ATP + H2O = ADP + phosphate + H(+). The RuvA-RuvB-RuvC complex processes Holliday junction (HJ) DNA during genetic recombination and DNA repair, while the RuvA-RuvB complex plays an important role in the rescue of blocked DNA replication forks via replication fork reversal (RFR). RuvA specifically binds to HJ cruciform DNA, conferring on it an open structure. The RuvB hexamer acts as an ATP-dependent pump, pulling dsDNA into and through the RuvAB complex. RuvB forms 2 homohexamers on either side of HJ DNA bound by 1 or 2 RuvA tetramers; 4 subunits per hexamer contact DNA at a time. Coordinated motions by a converter formed by DNA-disengaged RuvB subunits stimulates ATP hydrolysis and nucleotide exchange. Immobilization of the converter enables RuvB to convert the ATP-contained energy into a lever motion, pulling 2 nucleotides of DNA out of the RuvA tetramer per ATP hydrolyzed, thus driving DNA branch migration. The RuvB motors rotate together with the DNA substrate, which together with the progressing nucleotide cycle form the mechanistic basis for DNA recombination by continuous HJ branch migration. Branch migration allows RuvC to scan DNA until it finds its consensus sequence, where it cleaves and resolves cruciform DNA. The polypeptide is Holliday junction branch migration complex subunit RuvB (Frankia alni (strain DSM 45986 / CECT 9034 / ACN14a)).